Here is a 618-residue protein sequence, read N- to C-terminus: Prothrombin (618 aa).

Residues 1–24 form the signal peptide; it reads MSHVRGLGLPGCLALAALVSLVHS. A propeptide spanning residues 25 to 43 is cleaved from the precursor; the sequence is QHVFLAPQQALSLLQRVRR. The region spanning 44 to 90 is the Gla domain; it reads ANSGFLEELRKGNLERECVEEQCSYEEAFEALESPQDTDVFWAKYTV. 4-carboxyglutamate occurs at positions 50, 51, 58, 60, 63, 64, 69, 70, 73, and 76. An intrachain disulfide couples Cys61 to Cys66. Disulfide bonds link Cys91/Cys104, Cys109/Cys187, Cys130/Cys170, Cys158/Cys182, Cys215/Cys293, Cys236/Cys276, Cys264/Cys288, Cys333/Cys479, Cys388/Cys404, and Cys533/Cys547. 2 Kringle domains span residues 109 to 187 and 215 to 292; these read CAMD…VPVC and CLTE…NLNY. Residues Asn122 and Asn144 are each glycosylated (N-linked (GlcNAc...) asparagine). The 255-residue stretch at 361 to 615 folds into the Peptidase S1 domain; it reads IVEGWDAEKG…LKRWIQKVID (255 aa). Residue His403 is the Charge relay system of the active site. N-linked (GlcNAc...) asparagine glycosylation occurs at Asn413. Asp459 functions as the Charge relay system in the catalytic mechanism. Residues 548–570 are high affinity receptor-binding region which is also known as the TP508 peptide; sequence AGFKVNDTKRGDACEGDSGGPFV. Asn553 is a glycosylation site (N-linked (GlcNAc...) asparagine). A disulfide bond links Cys561 and Cys591. The Charge relay system role is filled by Ser565.

It belongs to the peptidase S1 family. In terms of assembly, heterodimer (named alpha-thrombin) of a light and a heavy chain; disulfide-linked. Forms a heterodimer with SERPINA5. In plasma, interacts (via N-terminus) with alpha-1-microglobulin; this interaction does not prevent the activation of prothrombin to thrombin. Post-translationally, the gamma-carboxyglutamyl residues, which bind calcium ions, result from the carboxylation of glutamyl residues by a microsomal enzyme, the vitamin K-dependent carboxylase. The modified residues are necessary for the calcium-dependent interaction with a negatively charged phospholipid surface, which is essential for the conversion of prothrombin to thrombin. In the penultimate step of the coagulation cascade, prothrombin is converted to thrombin by the prothrombinase complex composed of factor Xa (F10), cofactor Va (F5), and phospholipids. This activation requires factor Xa-catalyzed sequential cleavage at 2 sites, Arg-311 and Arg-360, along 2 possible pathways. In the first pathway, the first cleavage occurs at Arg-311, leading to the formation of the inactive intermediate prethrombin-2. This pathway preferentially occurs on platelets and in the absence of cofactor Va. In the second pathway, the first cleavage occurs at Arg-360, which separates protease domain into 2 chains that remain connected through a disulfide bond and generates the active intermediate meizothrombin. The presence of cofactor Va directs activation along the meizothrombin pathway and greatly accelerates the rate of cleavage at Arg-360, but has a smaller effect on the cleavage of meizothrombin at Arg-311. Meizothrombin accumulates as an intermediate when prothrombinase is assembled on the membrane of red blood cells.

It catalyses the reaction Selective cleavage of Arg-|-Gly bonds in fibrinogen to form fibrin and release fibrinopeptides A and B.. With respect to regulation, activity is promoted in the presence of negatively charged surfaces, such as polyphosphate and dextran sulfate. Inhibited by SERPINA5. Its function is as follows. Thrombin, which cleaves bonds after Arg and Lys, converts fibrinogen to fibrin and activates factors V, VII, VIII, XIII, and, in complex with thrombomodulin, protein C. Functions in blood homeostasis, inflammation and wound healing. Activates coagulation factor XI (F11); activation is promoted by the contact with negatively charged surfaces. Triggers the production of pro-inflammatory cytokines, such as MCP-1/CCL2 and IL8/CXCL8, in endothelial cells. This chain is Prothrombin (F2), found in Mus musculus (Mouse).